Consider the following 833-residue polypeptide: CUB domain-containing protein 1 (833 aa).

The first 29 residues, 1–29 (MAHSACGFSVALLGALLLGTARLLRGTEA), serve as a signal peptide directing secretion. The Extracellular segment spans residues 30–666 (SEIALPQRSG…VTLTPRTVDL (637 aa)). N-linked (GlcNAc...) asparagine glycans are attached at residues Asn-122, Asn-180, Asn-205, Asn-270, Asn-310, Asn-342, and Asn-386. Positions 417–540 (CLDHRYCYRQ…QGLIVSYTPY (124 aa)) constitute a CUB domain. An intrachain disulfide couples Cys-476 to Cys-499. Residues 667-687 (AVVIGAAGGGALLLFALVLII) form a helical membrane-spanning segment. Residues 688–833 (CFVKKKKKVD…HTQGPVETEE (146 aa)) are Cytoplasmic-facing. Phosphotyrosine is present on Tyr-731. The disordered stretch occupies residues 783-833 (AKFTAEELAPSSPPESESEPYTFSHPNKGEIGVRETDIPLLHTQGPVETEE). The segment covering 809-819 (NKGEIGVRETD) has biased composition (basic and acidic residues).

Interacts with CDH2/N-cadherin, CDH3/P-cadherin, SDC1/syndecan-1, SDC4/syndecan-4 and the serine protease ST14/MT-SP1. Also interacts SRC and PRKCG/protein kinase C gamma. Phosphorylated on tyrosine by kinases of the SRC family such as SRC and YES as well as by the protein kinase C gamma/PRKCG. Dephosphorylated by phosphotyrosine phosphatases. Also phosphorylated by suramin, a heparin analog. Tyrosine phosphorylated in response to dissociation of integrin alpha-6 beta-4 from laminin-5. In terms of processing, N-glycosylated. Post-translationally, a soluble form may also be produced by proteolytic cleavage at the cell surface (shedding). Another peptide of 80 kDa (p80) is present in cultured keratinocytes probably due to tryptic cleavage at an unidentified site on the N-terminal side. Converted to p80 by plasmin, a trypsin-like protease.

It is found in the cell membrane. May be involved in cell adhesion and cell matrix association. May play a role in the regulation of anchorage versus migration or proliferation versus differentiation via its phosphorylation. May be a novel marker for leukemia diagnosis and for immature hematopoietic stem cell subsets. Belongs to the tetraspanin web involved in tumor progression and metastasis. The sequence is that of CUB domain-containing protein 1 (Cdcp1) from Mus musculus (Mouse).